The primary structure comprises 397 residues: P2X purinoceptor 3 (397 aa).

Residues 1-20 (MNCISDFFTYETTKSVVVKS) lie on the Cytoplasmic side of the membrane. The chain crosses the membrane as a helical span at residues 21-43 (WTIGIINRAVQLLIISYFVGWVF). Over 44–322 (LHEKAYQVRD…AGKFNIIPTI (279 aa)) the chain is Extracellular. Positions 63 and 65 each coordinate ATP. 3 disulfide bridges follow: C107–C153, C116–C137, and C122–C147. E111 contacts Mg(2+). The N-linked (GlcNAc...) asparagine glycan is linked to N139. D158 lines the Mg(2+) pocket. D158 serves as a coordination point for Ca(2+). A glycan (N-linked (GlcNAc...) asparagine) is linked at N170. An ATP-binding site is contributed by T172. An N-linked (GlcNAc...) asparagine glycan is attached at N194. Intrachain disulfides connect C203–C213 and C247–C256. The ATP site is built by S275, N279, and R281. N-linked (GlcNAc...) asparagine glycosylation is present at N290. K299 serves as a coordination point for ATP. The chain crosses the membrane as a helical span at residues 323 to 341 (ISSVAAFTSVGVGTVLCDI). The Cytoplasmic portion of the chain corresponds to 342 to 397 (ILLNFLKGADHYKARKFEEVTETTLKGTASTNPVFTSDQATVEKQSTDSGAYSIGH).

The protein belongs to the P2X receptor family. In terms of assembly, homotrimer. Forms heterotrimer with P2RX2. Heterotrimeric P2RX2/3 has a ligand dose-response profile that is distinct from either homotrimeric P2RX2 or P2RX3.

It is found in the cell membrane. The catalysed reaction is Ca(2+)(in) = Ca(2+)(out). The enzyme catalyses Na(+)(in) = Na(+)(out). With respect to regulation, has high sensitivity to ATP. Fast activation by external ATP. Exhibits rapid desensitization. Sensitives to the ATP agonist:alpha/beta-methylene-ATP. Subject to allosteric inhibition by AF-219. Mg(2+) and Ca(2+) slow deactivation of P2RX3. In terms of biological role, extracellular ATP-activated non-selective cation channel. Plays particularly important role in sensory neurons where its activation is critical for gustatory, nociceptive responses, visceral reflexes and sensory hypersensitization. This chain is P2X purinoceptor 3 (P2rx3), found in Mus musculus (Mouse).